Here is a 54-residue protein sequence, read N- to C-terminus: Ovomucoid (54 aa).

In terms of domain architecture, Kazal-like spans 4–54 (VDCSEHPKPACTLEDRPLCGSDNKIYSNKCDFCNAVLESNGTLTLSHFGKC). Intrachain disulfides connect Cys-6/Cys-36, Cys-14/Cys-33, and Cys-22/Cys-54. Residue Asn-43 is glycosylated (N-linked (GlcNAc...) asparagine).

The protein resides in the secreted. The chain is Ovomucoid from Argusianus argus (Great argus).